The primary structure comprises 689 residues: Methionine--tRNA ligase (689 aa).

The short motif at 15–25 (PYANGPIHLGH) is the 'HIGH' region element. The Zn(2+) site is built by Cys146, Cys149, Cys159, and Cys162. Positions 332-336 (KMSKS) match the 'KMSKS' region motif. Lys335 is an ATP binding site. The segment at 546 to 577 (KDNLQPTEAPKADKKADKKVEKKATTGDPLTD) is disordered. Residues 555 to 570 (PKADKKADKKVEKKAT) show a composition bias toward basic and acidic residues. Residues 588–689 (DFAKLDLRIA…QGAKPGMRVK (102 aa)) enclose the tRNA-binding domain.

The protein belongs to the class-I aminoacyl-tRNA synthetase family. MetG type 1 subfamily. As to quaternary structure, homodimer. It depends on Zn(2+) as a cofactor.

Its subcellular location is the cytoplasm. It carries out the reaction tRNA(Met) + L-methionine + ATP = L-methionyl-tRNA(Met) + AMP + diphosphate. Its function is as follows. Is required not only for elongation of protein synthesis but also for the initiation of all mRNA translation through initiator tRNA(fMet) aminoacylation. This Shewanella denitrificans (strain OS217 / ATCC BAA-1090 / DSM 15013) protein is Methionine--tRNA ligase.